The chain runs to 152 residues: Small ribosomal subunit protein bS6 (152 aa).

It belongs to the bacterial ribosomal protein bS6 family.

Binds together with bS18 to 16S ribosomal RNA. This is Small ribosomal subunit protein bS6 from Bdellovibrio bacteriovorus (strain ATCC 15356 / DSM 50701 / NCIMB 9529 / HD100).